A 379-amino-acid polypeptide reads, in one-letter code: MDLARDPTGAEIAKFIATRTGAQMVQLMRCIKEPAAQAAFTAKLLVASPAVSGQPATPEKARKALNAFVGFRCYYITIPMFKPWPMKKLSNLIGLLWEADPNKSLWSLMAKAWSTIRDQIGKDQAPLNQFFRIICPHLKLPDPASYLEIHGWILNVNEEGDPTISRSADSEFASIGTGNTDMTLSVEDIITYVQSLGYAHGFILDDNKPSSTFLGHSVSSTLEKNTSAISATQATSKAAHARFLVRNKRRAKRQAVRNASYRASLDQDILIAHQLDPAPVDNHVPDCYSTTAPVLNQSPNQFYDGLTTLLSDQIPTIQDDAGHLDNAHLFNDCSLPGDVSFMNIDDFTTNMPNLIDYDAFRLGADEDVTLPIFDDITQI.

Residues 60–117 (KARKALNAFVGFRCYYITIPMFKPWPMKKLSNLIGLLWEADPNKSLWSLMAKAWSTIR) constitute a DNA-binding region (alpha box).

It belongs to the MATALPHA1 family.

It localises to the nucleus. In terms of biological role, mating type proteins are sequence specific DNA-binding proteins that act as master switches in fungal differentiation by controlling gene expression in a cell type-specific fashion. Transcriptional activator that induces the transcription of alpha-specific genes. This Cochliobolus carbonum (strain 26-R-13) (Maize leaf spot fungus) protein is Mating-type protein MAT-1 (MAT1).